Here is a 497-residue protein sequence, read N- to C-terminus: Putative zinc finger and SCAN domain-containing protein 5D (497 aa).

In terms of domain architecture, SCAN box spans 41 to 123 (KAGRRMFSCP…DLLRNNRRPK (83 aa)). The disordered stretch occupies residues 148 to 342 (PASVRDDPRG…GPAGAVSHPN (195 aa)). Residues 158–167 (VSSQRASSVN) are compositionally biased toward polar residues. Basic and acidic residues-rich tracts occupy residues 216 to 229 (PTLE…REEN) and 249 to 259 (KEGKEPKKRAS). C2H2-type zinc fingers lie at residues 352–374 (FACG…MRSH), 380–402 (FQCN…QRIH), 408–430 (YTCD…KRSH), 436–458 (YKCK…KLIH), and 464–486 (YKCP…QKTH).

It localises to the nucleus. The sequence is that of Putative zinc finger and SCAN domain-containing protein 5D from Homo sapiens (Human).